A 504-amino-acid chain; its full sequence is Glucan endo-1,3-beta-glucosidase 7 (504 aa).

An N-terminal signal peptide occupies residues 1–22 (MALSISIYFLLIFLSHFPSSHA). Glu-119 acts as the Proton donor in catalysis. Glu-264 acts as the Nucleophile in catalysis. A disulfide bridge connects residues Cys-365 and Cys-427.

It belongs to the glycosyl hydrolase 17 family. In terms of processing, contains two additional disulfide bonds.

It localises to the secreted. It is found in the cell wall. The catalysed reaction is Hydrolysis of (1-&gt;3)-beta-D-glucosidic linkages in (1-&gt;3)-beta-D-glucans.. The protein is Glucan endo-1,3-beta-glucosidase 7 of Arabidopsis thaliana (Mouse-ear cress).